A 142-amino-acid chain; its full sequence is Small ribosomal subunit protein eS6 (142 aa).

Residues 117–142 form a disordered region; that stretch reads EKPLDELAPKKEKKEGAAGGRAPAKK. Positions 118-132 are enriched in basic and acidic residues; sequence KPLDELAPKKEKKEG.

This sequence belongs to the eukaryotic ribosomal protein eS6 family.

In Methanocella arvoryzae (strain DSM 22066 / NBRC 105507 / MRE50), this protein is Small ribosomal subunit protein eS6.